A 294-amino-acid chain; its full sequence is Mimecan (294 aa).

The N-terminal stretch at 1–19 (MKTLQAAFFLVAFVPLVKP) is a signal peptide. Asparagine 61 carries N-linked (GlcNAc...) asparagine glycosylation. LRR repeat units follow at residues 108–127 (EAVP…FNKI), 128–151 (KRIA…GNMI), 152–175 (EEIE…ENRL), 176–195 (VKLP…QNRI), 196–221 (KSRG…HNAL), 222–242 (ESVP…HNNI), and 243–273 (TTIN…GNPI). N-linked (GlcNAc...) asparagine glycans are attached at residues asparagine 241 and asparagine 254. Cysteine 251 and cysteine 284 form a disulfide bridge.

This sequence belongs to the small leucine-rich proteoglycan (SLRP) family. SLRP class III subfamily. In terms of processing, the composition of the N-linked chains or the substitution of the N-linked sites is different between embryonic and adult tissues. Contains keratan sulfate.

Its subcellular location is the secreted. It localises to the extracellular space. The protein resides in the extracellular matrix. In terms of biological role, induces bone formation in conjunction with TGF-beta-1 or TGF-beta-2. This chain is Mimecan (OGN), found in Gallus gallus (Chicken).